The primary structure comprises 420 residues: Odorant receptor 63a (420 aa).

Over Met-1–Arg-43 the chain is Cytoplasmic. The chain crosses the membrane as a helical span at residues Ile-44–Leu-64. Residues Ala-65–Glu-76 are Extracellular-facing. Residues Thr-77–Ala-97 form a helical membrane-spanning segment. Residues His-98–Gln-150 lie on the Cytoplasmic side of the membrane. Residues Ile-151 to Val-171 traverse the membrane as a helical segment. Topologically, residues Ile-172–Cys-217 are extracellular. Residues Ser-218–Leu-238 traverse the membrane as a helical segment. The Cytoplasmic portion of the chain corresponds to His-239–Gln-296. Residues Phe-297–Asn-317 traverse the membrane as a helical segment. N-linked (GlcNAc...) asparagine glycosylation occurs at Asn-318. Residues Asn-318–Ser-320 lie on the Extracellular side of the membrane. Residues Ile-321 to Cys-341 form a helical membrane-spanning segment. Topologically, residues Tyr-342 to Leu-387 are cytoplasmic. Residues Asp-388–Gly-408 traverse the membrane as a helical segment. Topologically, residues Gln-409–Lys-420 are extracellular.

This sequence belongs to the insect chemoreceptor superfamily. Heteromeric odorant receptor channel (TC 1.A.69) family. Or63a subfamily. In terms of assembly, interacts with Orco. Complexes exist early in the endomembrane system in olfactory sensory neurons (OSNs), coupling these complexes to the conserved ciliary trafficking pathway.

Its subcellular location is the cell membrane. Functionally, odorant receptor which mediates acceptance or avoidance behavior, depending on its substrates. The odorant receptor repertoire encodes a large collection of odor stimuli that vary widely in identity, intensity, and duration. May form a complex with Orco to form odorant-sensing units, providing sensitive and prolonged odorant signaling and calcium permeability. Involved in the behavioral responses to butyl acetate, isoamyl acetate, and hexanoic acid. The chain is Odorant receptor 63a (Or63a) from Drosophila melanogaster (Fruit fly).